The chain runs to 376 residues: Putative glutamate--cysteine ligase 2-1 (376 aa).

It belongs to the glutamate--cysteine ligase type 2 family. YbdK subfamily.

It catalyses the reaction L-cysteine + L-glutamate + ATP = gamma-L-glutamyl-L-cysteine + ADP + phosphate + H(+). In terms of biological role, ATP-dependent carboxylate-amine ligase which exhibits weak glutamate--cysteine ligase activity. The polypeptide is Putative glutamate--cysteine ligase 2-1 (Mycolicibacterium smegmatis (strain ATCC 700084 / mc(2)155) (Mycobacterium smegmatis)).